The sequence spans 234 residues: Adenosine 5'-phosphosulfate reductase (234 aa).

[4Fe-4S] cluster-binding residues include Cys-120, Cys-121, Cys-203, and Cys-206. Cys-229 acts as the Nucleophile; cysteine thiosulfonate intermediate in catalysis.

Belongs to the PAPS reductase family. CysH subfamily. The cofactor is [4Fe-4S] cluster.

It is found in the cytoplasm. The catalysed reaction is [thioredoxin]-disulfide + sulfite + AMP + 2 H(+) = adenosine 5'-phosphosulfate + [thioredoxin]-dithiol. The protein operates within sulfur metabolism; hydrogen sulfide biosynthesis; sulfite from sulfate. Catalyzes the formation of sulfite from adenosine 5'-phosphosulfate (APS) using thioredoxin as an electron donor. This chain is Adenosine 5'-phosphosulfate reductase, found in Bacillus cytotoxicus (strain DSM 22905 / CIP 110041 / 391-98 / NVH 391-98).